We begin with the raw amino-acid sequence, 299 residues long: DNA-binding transcriptional activator HetR (299 aa).

Residue serine 152 is part of the active site.

Belongs to the peptidase S48 family. In terms of assembly, homodimer; disulfide-linked.

In terms of biological role, controls heterocyst differentiation. Dimerization is required for DNA-binding. Has both a protease and a DNA-binding activity. Increased expression leads to more heterocysts than usual. In Nostoc punctiforme (strain ATCC 29133 / PCC 73102), this protein is DNA-binding transcriptional activator HetR.